The following is a 304-amino-acid chain: tRNA pseudouridine synthase B (304 aa).

The active-site Nucleophile is D41.

Belongs to the pseudouridine synthase TruB family. Type 1 subfamily.

The enzyme catalyses uridine(55) in tRNA = pseudouridine(55) in tRNA. Functionally, responsible for synthesis of pseudouridine from uracil-55 in the psi GC loop of transfer RNAs. The protein is tRNA pseudouridine synthase B of Nitratidesulfovibrio vulgaris (strain ATCC 29579 / DSM 644 / CCUG 34227 / NCIMB 8303 / VKM B-1760 / Hildenborough) (Desulfovibrio vulgaris).